The sequence spans 152 residues: ADP-ribose glycohydrolase OARD1 (152 aa).

An N-acetylalanine modification is found at Ala-2. Residues 2 to 152 (AGSPNEDSEG…TDIRITVYTL (151 aa)) form the Macro domain. At Ser-4 the chain carries Phosphoserine. Leu-21 is a substrate binding site. The active-site Nucleophile is the Lys-84. Residues 119-125 (RIGCGLD) and Leu-152 contribute to the substrate site. The active-site Proton acceptor is the Asp-125.

The protein resides in the nucleus. It localises to the nucleoplasm. It is found in the nucleolus. Its subcellular location is the chromosome. The enzyme catalyses 2''-O-acetyl-ADP-D-ribose + H2O = ADP-D-ribose + acetate + H(+). It catalyses the reaction 5-O-(ADP-D-ribosyl)-L-glutamyl-[protein] + H2O = L-glutamyl-[protein] + ADP-D-ribose + H(+). It carries out the reaction alpha-NAD(+) + H2O = ADP-D-ribose + nicotinamide + H(+). With respect to regulation, subject to competitive inhibition by the product ADP-ribose. Its function is as follows. ADP-ribose glycohydrolase that hydrolyzes ADP-ribose and acts on different substrates, such as proteins ADP-ribosylated on glutamate and O-acetyl-ADP-D-ribose. Specifically acts as a glutamate mono-ADP-ribosylhydrolase by mediating the removal of mono-ADP-ribose attached to glutamate residues on proteins. Does not act on poly-ADP-ribosylated proteins: the poly-ADP-ribose chain of poly-ADP-ribosylated glutamate residues must by hydrolyzed into mono-ADP-ribosylated glutamate by PARG to become a substrate for OARD1. Deacetylates O-acetyl-ADP ribose, a signaling molecule generated by the deacetylation of acetylated lysine residues in histones and other proteins. Catalyzes the deacylation of O-acetyl-ADP-ribose, O-propionyl-ADP-ribose and O-butyryl-ADP-ribose, yielding ADP-ribose plus acetate, propionate and butyrate, respectively. This is ADP-ribose glycohydrolase OARD1 from Bos taurus (Bovine).